We begin with the raw amino-acid sequence, 359 residues long: Heat-inducible transcription repressor HrcA (359 aa).

This sequence belongs to the HrcA family.

Negative regulator of class I heat shock genes (grpE-dnaK-dnaJ and groELS operons). Prevents heat-shock induction of these operons. The chain is Heat-inducible transcription repressor HrcA from Sinorhizobium fredii (strain NBRC 101917 / NGR234).